Here is a 46-residue protein sequence, read N- to C-terminus: Defensin-like protein 2 (46 aa).

Intrachain disulfides connect Cys-3–Cys-46, Cys-13–Cys-33, Cys-19–Cys-40, and Cys-23–Cys-42.

Monomer. In terms of tissue distribution, present in seeds, cotyledons and leaves. Not found in roots or stems.

Functionally, has antibacterial activity against the Gram-positive bacterium S.aureus and the Gram-negative bacteria E.coli and P.syringae. Does not have antibacterial activity against the phytopathogenic bacteria R.solanacearum, Rhataybacter sp and Erwinia sp. Does not inhibit trypsin, chymotrypsin or alpha-amylases. In Vigna unguiculata (Cowpea), this protein is Defensin-like protein 2.